We begin with the raw amino-acid sequence, 257 residues long: Snake venom serine protease 2C (257 aa).

The N-terminal stretch at 1–18 (MVLIRVLANLLILQLSYA) is a signal peptide. The propeptide occupies 19–24 (QKSSEL). In terms of domain architecture, Peptidase S1 spans 25–248 (VIGGHPCNIN…HLDWIKSIIA (224 aa)). 6 disulfides stabilise this stretch: cysteine 31–cysteine 162, cysteine 49–cysteine 65, cysteine 97–cysteine 255, cysteine 141–cysteine 209, cysteine 173–cysteine 188, and cysteine 199–cysteine 224. Residues histidine 64 and aspartate 109 each act as charge relay system in the active site. Residues asparagine 116, asparagine 120, and asparagine 121 are each glycosylated (N-linked (GlcNAc...) asparagine). Catalysis depends on serine 203, which acts as the Charge relay system.

It belongs to the peptidase S1 family. Snake venom subfamily. As to quaternary structure, monomer. Expressed by the venom gland.

It is found in the secreted. In terms of biological role, snake venom serine protease that may act in the hemostasis system of the prey. This chain is Snake venom serine protease 2C (TLG2C), found in Craspedocephalus gramineus (Bamboo pit viper).